Here is an 88-residue protein sequence, read N- to C-terminus: Pape peptide (88 aa).

The N-terminal stretch at Met-1–Ser-22 is a signal peptide. Positions Phe-23–Gly-45 are excised as a propeptide. The interval Leu-49–Arg-88 is disordered. The span at Glu-56–Glu-68 shows a compositional bias: pro residues. PAPE repeat units lie at residues Pro-57–Glu-60, Pro-61–Glu-64, and Pro-65–Glu-68. Positions Ala-69 to Ala-81 are enriched in low complexity.

In terms of tissue distribution, expressed by the venom gland.

Its subcellular location is the secreted. The protein is Pape peptide of Tityus serrulatus (Brazilian scorpion).